Here is a 339-residue protein sequence, read N- to C-terminus: MAHVAEWKKKEVEELANLIKSYPVVALVDVSSMPAYPLSQMRRLIRENNGLLRVSRNTLIELAIKKVAQELGKPELEKLINYIEGGAGILVTTMNPFKLYKFLQQNRQPAPAKPGAKVPKDVVIPAGPTSLAPGPIVGQMQAMGIPARIERGKVTIQKDTVVLKAGEEITPELANILNALGIQPLEVGLDLLAVYEDGIIYTPDVLAIDESEYINMLQKAYMHAFNLAVNIAYPTPQTIEAIIQKAFLNAKAVAVEAGYITKETISDIIGRAIRAMLLLAQQLPEDVLDEKTKELLSAQAQVSVAQVEEEKKEEKVEEEKEDEEASEEEALAGLSALFG.

The segment at 307–339 is disordered; that stretch reads VEEEKKEEKVEEEKEDEEASEEEALAGLSALFG. A compositionally biased stretch (basic and acidic residues) spans 308–318; that stretch reads EEEKKEEKVEE. Over residues 319–330 the composition is skewed to acidic residues; sequence EKEDEEASEEEA.

This sequence belongs to the universal ribosomal protein uL10 family. Part of the 50S ribosomal subunit. Forms part of the ribosomal stalk which helps the ribosome interact with GTP-bound translation factors. Forms a heptameric L10(L12)2(L12)2(L12)2 complex, where L10 forms an elongated spine to which the L12 dimers bind in a sequential fashion.

Forms part of the ribosomal stalk, playing a central role in the interaction of the ribosome with GTP-bound translation factors. In Pyrococcus furiosus (strain ATCC 43587 / DSM 3638 / JCM 8422 / Vc1), this protein is Large ribosomal subunit protein uL10.